Here is a 110-residue protein sequence, read N- to C-terminus: U1-lycotoxin-Ls1ee (110 aa).

The first 20 residues, methionine 1–alanine 20, serve as a signal peptide directing secretion. Positions glutamate 21 to arginine 44 are excised as a propeptide. Cystine bridges form between cysteine 47–cysteine 62, cysteine 54–cysteine 71, cysteine 61–cysteine 89, and cysteine 73–cysteine 87.

Belongs to the neurotoxin 19 (CSTX) family. 03 subfamily. In terms of tissue distribution, expressed by the venom gland.

Its subcellular location is the secreted. The sequence is that of U1-lycotoxin-Ls1ee from Lycosa singoriensis (Wolf spider).